Reading from the N-terminus, the 174-residue chain is Cytochrome c-type biogenesis protein CcmE (174 aa).

The Cytoplasmic portion of the chain corresponds to 1–7 (MTRKSRR). A helical; Signal-anchor for type II membrane protein membrane pass occupies residues 8 to 28 (LILIGAGLGVLALAAGLILTA). Residues 29 to 174 (LNDTIVFFRT…PAVSPARSTP (146 aa)) are Periplasmic-facing. Heme-binding residues include His121 and Tyr125. Residues 130–144 (VADALKKSGHWKEGE) show a composition bias toward basic and acidic residues. The interval 130 to 174 (VADALKKSGHWKEGEEGGPVPPAAKTPGPQSSAAPPAVSPARSTP) is disordered. Residues 156–174 (PGPQSSAAPPAVSPARSTP) are compositionally biased toward low complexity.

The protein belongs to the CcmE/CycJ family.

The protein localises to the cell inner membrane. In terms of biological role, heme chaperone required for the biogenesis of c-type cytochromes. Transiently binds heme delivered by CcmC and transfers the heme to apo-cytochromes in a process facilitated by CcmF and CcmH. The protein is Cytochrome c-type biogenesis protein CcmE of Azorhizobium caulinodans (strain ATCC 43989 / DSM 5975 / JCM 20966 / LMG 6465 / NBRC 14845 / NCIMB 13405 / ORS 571).